The following is a 297-amino-acid chain: Tyrosine recombinase XerD (297 aa).

In terms of domain architecture, Core-binding (CB) spans 1–86; sequence MKNLALIDLF…AMRKLFQYLY (86 aa). Residues 107–291 form the Tyr recombinase domain; it reads RLPKYLTEQQ…AKERLKRLHE (185 aa). Active-site residues include R147, K171, H243, R246, and H269. The active-site O-(3'-phospho-DNA)-tyrosine intermediate is the Y278.

It belongs to the 'phage' integrase family. XerD subfamily. As to quaternary structure, forms a cyclic heterotetrameric complex composed of two molecules of XerC and two molecules of XerD.

It is found in the cytoplasm. Its function is as follows. Site-specific tyrosine recombinase, which acts by catalyzing the cutting and rejoining of the recombining DNA molecules. The XerC-XerD complex is essential to convert dimers of the bacterial chromosome into monomers to permit their segregation at cell division. It also contributes to the segregational stability of plasmids. This chain is Tyrosine recombinase XerD, found in Haemophilus influenzae (strain ATCC 51907 / DSM 11121 / KW20 / Rd).